The following is a 118-amino-acid chain: MGDKEFVWAIKNGDLDAVKEFVLGGEDVNRTLDGGRKPMHYAADCGQDEVLEFLLSKGANINAADKHGITPLLSACYEGHRKCVELLLSKGADKTVKGPDGLNALESTDNQAIKDLLH.

3 ANK repeats span residues 1–30, 34–65, and 67–98; these read MGDK…DVNR, GGRK…NAAD, and HGIT…TVKG.

This sequence belongs to the myotrophin family.

It localises to the cytoplasm. The protein resides in the nucleus. The protein localises to the perinuclear region. In terms of biological role, regulates NF-kappa-B transcription factor activity. Promotes growth of cardiomyocytes, but not cardiomyocyte proliferation. Promotes cardiac muscle hypertrophy. Plays a role in the regulation of the growth of actin filaments. Inhibits the activity of the F-actin-capping protein complex. The protein is Myotrophin (mtpn) of Xenopus tropicalis (Western clawed frog).